The chain runs to 205 residues: Beta-crystallin B2 (205 aa).

Alanine 2 carries the N-acetylalanine modification. The interval 2–16 is N-terminal arm; that stretch reads ASDHQTQAGKPQPLN. Beta/gamma crystallin 'Greek key' domains follow at residues 17–56 and 57–101; these read PKIIIFEQENFQGHSHELNGPCPNLKETGVEKAGSVLVQA and GPWV…RPIK. Residues 102–106 form a connecting peptide region; that stretch reads VDSQE. Beta/gamma crystallin 'Greek key' domains follow at residues 107 to 148 and 149 to 191; these read HKII…RVQS and GTWV…RRIR. Positions 193 to 205 are C-terminal arm; sequence MQWHQRGAFHPTN.

This sequence belongs to the beta/gamma-crystallin family. Homo/heterodimer, or complexes of higher-order. The structure of beta-crystallin oligomers seems to be stabilized through interactions between the N-terminal arms.

Crystallins are the dominant structural components of the vertebrate eye lens. This Oryctolagus cuniculus (Rabbit) protein is Beta-crystallin B2 (CRYBB2).